The chain runs to 207 residues: Chaperone protein TorD (207 aa).

The protein belongs to the TorD/DmsD family. TorD subfamily.

It is found in the cytoplasm. In terms of biological role, involved in the biogenesis of TorA. Acts on TorA before the insertion of the molybdenum cofactor and, as a result, probably favors a conformation of the apoenzyme that is competent for acquiring the cofactor. The chain is Chaperone protein TorD from Aggregatibacter aphrophilus (strain NJ8700) (Haemophilus aphrophilus).